We begin with the raw amino-acid sequence, 302 residues long: Bifunctional protein FolD (302 aa).

NADP(+) is bound by residues 168–170, Thr197, and Val238; that span reads GRS.

This sequence belongs to the tetrahydrofolate dehydrogenase/cyclohydrolase family. In terms of assembly, homodimer.

The enzyme catalyses (6R)-5,10-methylene-5,6,7,8-tetrahydrofolate + NADP(+) = (6R)-5,10-methenyltetrahydrofolate + NADPH. It catalyses the reaction (6R)-5,10-methenyltetrahydrofolate + H2O = (6R)-10-formyltetrahydrofolate + H(+). Its pathway is one-carbon metabolism; tetrahydrofolate interconversion. In terms of biological role, catalyzes the oxidation of 5,10-methylenetetrahydrofolate to 5,10-methenyltetrahydrofolate and then the hydrolysis of 5,10-methenyltetrahydrofolate to 10-formyltetrahydrofolate. This is Bifunctional protein FolD from Desulfatibacillum aliphaticivorans.